The sequence spans 378 residues: Cell surface mannoprotein MP65 (378 aa).

Positions 1 to 32 are cleaved as a signal peptide; it reads MLFKSFVTFTVLANALAAPLAHQHHQHKEEKR. The segment at 67-124 is disordered; sequence VSVSVNTEPPQNHPTTTQDVASASTYPSSTDGSAASSSAAASSSSQAGSEPSGGVGSG. Residues 72-93 show a composition bias toward polar residues; the sequence is NTEPPQNHPTTTQDVASASTYP. Residues 94-116 show a composition bias toward low complexity; that stretch reads SSTDGSAASSSAAASSSSQAGSE. Glutamate 316 (nucleophile) is an active-site residue.

The protein belongs to the glycosyl hydrolase 17 family. Component of a multiprotein complex of 250 kDa composed of at least HYR1, MP65, and PRA1. Post-translationally, glycosylated protein with a polysaccharide moiety composed exclusively of mannose and glucose at a ratio of 12.7 to 1. Contributes highly to the carbohydrate component of the matrix. Treatment with tunicamycin impairs glycosylation.

It localises to the secreted. The protein resides in the cell wall. Functionally, surface mannoprotein required for hyphal morphogenesis, surface adherence, and pathogenicity. Contributes in a high proportion to the carbohydrate component of the matrix due to high levels of glycosylation and may play important roles during biofilm development and maintenance. Acts as a major antigen target of host cell-mediated immune response. Induces extensive T-cell proliferation of human peripheral blood mononuclear cells. Facilitates host dendritic cells maturation and promotes cytokine production through its glycosylated portion while its protein core is essentially involved in induction of T-cell response. The chain is Cell surface mannoprotein MP65 (MP65) from Candida albicans (strain SC5314 / ATCC MYA-2876) (Yeast).